We begin with the raw amino-acid sequence, 395 residues long: Demethylmacrocin O-methyltransferase (395 aa).

It catalyses the reaction demethylmacrocin + S-adenosyl-L-methionine = macrocin + S-adenosyl-L-homocysteine + H(+). Its pathway is antibiotic biosynthesis; tylosin biosynthesis. In terms of biological role, O-methyltransferase that catalyzes the conversion of demethylmacrocin to macrocin, the penultimate step of tylosin antibiotic biosynthesis. Also able to mediate the conversion of demethyllactenocin to lactenocin. The chain is Demethylmacrocin O-methyltransferase (tylE) from Streptomyces fradiae (Streptomyces roseoflavus).